Reading from the N-terminus, the 373-residue chain is D-alanine--D-alanine ligase A (373 aa).

The ATP-grasp domain maps to 146–355 (KRLAEFAGIP…YGELLSRLVD (210 aa)). 179-234 (VEGLSLPVFVKPCNMGSSVGIHKVKTQDALEAALDDAFRYDVKVLVQQGIDAREIE) is a binding site for ATP. The Mg(2+) site is built by D308, E322, and N324.

This sequence belongs to the D-alanine--D-alanine ligase family. Requires Mg(2+) as cofactor. It depends on Mn(2+) as a cofactor.

The protein resides in the cytoplasm. The enzyme catalyses 2 D-alanine + ATP = D-alanyl-D-alanine + ADP + phosphate + H(+). The protein operates within cell wall biogenesis; peptidoglycan biosynthesis. Cell wall formation. This Bradyrhizobium diazoefficiens (strain JCM 10833 / BCRC 13528 / IAM 13628 / NBRC 14792 / USDA 110) protein is D-alanine--D-alanine ligase A.